Here is a 361-residue protein sequence, read N- to C-terminus: Queuine tRNA-ribosyltransferase (361 aa).

Asp92 functions as the Proton acceptor in the catalytic mechanism. Residues 92 to 96, Asp146, Gln189, and Gly216 each bind substrate; that span reads DSGGF. The tract at residues 247–253 is RNA binding; it reads GVGKPSD. Residue Asp266 is the Nucleophile of the active site. Residues 271–275 form an RNA binding; important for wobble base 34 recognition region; it reads TRSGR. Residues Cys304, Cys306, Cys309, and His335 each contribute to the Zn(2+) site.

The protein belongs to the queuine tRNA-ribosyltransferase family. Homodimer. Within each dimer, one monomer is responsible for RNA recognition and catalysis, while the other monomer binds to the replacement base PreQ1. Requires Zn(2+) as cofactor.

The catalysed reaction is 7-aminomethyl-7-carbaguanine + guanosine(34) in tRNA = 7-aminomethyl-7-carbaguanosine(34) in tRNA + guanine. The protein operates within tRNA modification; tRNA-queuosine biosynthesis. In terms of biological role, catalyzes the base-exchange of a guanine (G) residue with the queuine precursor 7-aminomethyl-7-deazaguanine (PreQ1) at position 34 (anticodon wobble position) in tRNAs with GU(N) anticodons (tRNA-Asp, -Asn, -His and -Tyr). Catalysis occurs through a double-displacement mechanism. The nucleophile active site attacks the C1' of nucleotide 34 to detach the guanine base from the RNA, forming a covalent enzyme-RNA intermediate. The proton acceptor active site deprotonates the incoming PreQ1, allowing a nucleophilic attack on the C1' of the ribose to form the product. After dissociation, two additional enzymatic reactions on the tRNA convert PreQ1 to queuine (Q), resulting in the hypermodified nucleoside queuosine (7-(((4,5-cis-dihydroxy-2-cyclopenten-1-yl)amino)methyl)-7-deazaguanosine). This Rickettsia prowazekii (strain Madrid E) protein is Queuine tRNA-ribosyltransferase.